Here is a 189-residue protein sequence, read N- to C-terminus: Lipid A acyltransferase PagP (189 aa).

The signal sequence occupies residues 1 to 23 (MRLKLILYFLILSCYLGIGSARA). Active-site residues include histidine 61, aspartate 104, and serine 105.

It belongs to the lipid A palmitoyltransferase family. Homodimer.

It is found in the cell outer membrane. The catalysed reaction is a lipid A + a 1,2-diacyl-sn-glycero-3-phosphocholine = a hepta-acyl lipid A + a 2-acyl-sn-glycero-3-phosphocholine. The enzyme catalyses a lipid IVA + a 1,2-diacyl-sn-glycero-3-phosphocholine = a lipid IVB + a 2-acyl-sn-glycero-3-phosphocholine. It carries out the reaction a lipid IIA + a 1,2-diacyl-sn-glycero-3-phosphocholine = a lipid IIB + a 2-acyl-sn-glycero-3-phosphocholine. Transfers a fatty acid residue from the sn-1 position of a phospholipid to the N-linked hydroxyfatty acid chain on the proximal unit of lipid A or its precursors. This Erwinia tasmaniensis (strain DSM 17950 / CFBP 7177 / CIP 109463 / NCPPB 4357 / Et1/99) protein is Lipid A acyltransferase PagP.